Reading from the N-terminus, the 128-residue chain is Small ribosomal subunit protein uS11 (128 aa).

This sequence belongs to the universal ribosomal protein uS11 family. As to quaternary structure, part of the 30S ribosomal subunit. Interacts with proteins S7 and S18. Binds to IF-3.

Functionally, located on the platform of the 30S subunit, it bridges several disparate RNA helices of the 16S rRNA. Forms part of the Shine-Dalgarno cleft in the 70S ribosome. This is Small ribosomal subunit protein uS11 from Aster yellows witches'-broom phytoplasma (strain AYWB).